We begin with the raw amino-acid sequence, 1404 residues long: DNA-directed RNA polymerase subunit beta' (1404 aa).

Zn(2+) is bound by residues Cys-72, Cys-74, Cys-87, and Cys-90. Mg(2+) contacts are provided by Asp-462, Asp-464, and Asp-466. Residues Cys-816, Cys-890, Cys-897, and Cys-900 each coordinate Zn(2+).

This sequence belongs to the RNA polymerase beta' chain family. The RNAP catalytic core consists of 2 alpha, 1 beta, 1 beta' and 1 omega subunit. When a sigma factor is associated with the core the holoenzyme is formed, which can initiate transcription. Requires Mg(2+) as cofactor. It depends on Zn(2+) as a cofactor.

It catalyses the reaction RNA(n) + a ribonucleoside 5'-triphosphate = RNA(n+1) + diphosphate. In terms of biological role, DNA-dependent RNA polymerase catalyzes the transcription of DNA into RNA using the four ribonucleoside triphosphates as substrates. The chain is DNA-directed RNA polymerase subunit beta' from Azoarcus sp. (strain BH72).